A 430-amino-acid chain; its full sequence is Agropine synthesis reductase (430 aa).

Position 203–227 (203–227 (LISGPSRGIGKAIAENLIAHGYRMS)) interacts with NAD(+). Serine 333 contacts substrate. The Proton acceptor role is filled by tyrosine 346.

Belongs to the short-chain dehydrogenases/reductases (SDR) family.

Its pathway is opine metabolism; mannopine biosynthesis. Its function is as follows. Reduces deoxy-fructosyl-glutamine to mannopine. In Rhizobium rhizogenes (Agrobacterium rhizogenes), this protein is Agropine synthesis reductase (mas1).